The following is a 135-amino-acid chain: Large ribosomal subunit protein uL16c (135 aa).

This sequence belongs to the universal ribosomal protein uL16 family. In terms of assembly, part of the 50S ribosomal subunit.

The protein localises to the plastid. It is found in the chloroplast. This Phaseolus vulgaris (Kidney bean) protein is Large ribosomal subunit protein uL16c.